Reading from the N-terminus, the 1103-residue chain is Mediator of RNA polymerase II transcription subunit 14 (1103 aa).

2 disordered regions span residues 22–61 and 1043–1067; these read LNGV…GSDE and TTPK…PAIR. Over residues 23-36 the composition is skewed to polar residues; the sequence is NGVSSAPAGSSQLG.

This sequence belongs to the Mediator complex subunit 14 family. Component of the Mediator complex.

Its subcellular location is the nucleus. In terms of biological role, component of the Mediator complex, a coactivator involved in the regulated transcription of nearly all RNA polymerase II-dependent genes. Mediator functions as a bridge to convey information from gene-specific regulatory proteins to the basal RNA polymerase II transcription machinery. Mediator is recruited to promoters by direct interactions with regulatory proteins and serves as a scaffold for the assembly of a functional preinitiation complex with RNA polymerase II and the general transcription factors. This chain is Mediator of RNA polymerase II transcription subunit 14 (rgr1), found in Emericella nidulans (strain FGSC A4 / ATCC 38163 / CBS 112.46 / NRRL 194 / M139) (Aspergillus nidulans).